A 367-amino-acid polypeptide reads, in one-letter code: 3-dehydroquinate synthase (367 aa).

NAD(+) is bound by residues 69-74, 103-107, 127-128, K140, and K149; these read DGEAFK, GVIGD, and TT. Residues E182, H245, and H262 each coordinate Zn(2+).

The protein belongs to the sugar phosphate cyclases superfamily. Dehydroquinate synthase family. Requires Co(2+) as cofactor. It depends on Zn(2+) as a cofactor. NAD(+) serves as cofactor.

It localises to the cytoplasm. The enzyme catalyses 7-phospho-2-dehydro-3-deoxy-D-arabino-heptonate = 3-dehydroquinate + phosphate. Its pathway is metabolic intermediate biosynthesis; chorismate biosynthesis; chorismate from D-erythrose 4-phosphate and phosphoenolpyruvate: step 2/7. Functionally, catalyzes the conversion of 3-deoxy-D-arabino-heptulosonate 7-phosphate (DAHP) to dehydroquinate (DHQ). This is 3-dehydroquinate synthase from Pseudomonas savastanoi pv. phaseolicola (strain 1448A / Race 6) (Pseudomonas syringae pv. phaseolicola (strain 1448A / Race 6)).